Here is a 544-residue protein sequence, read N- to C-terminus: Methionine--tRNA ligase (544 aa).

The short motif at 10 to 20 (PYANGSLHLGH) is the 'HIGH' region element. The Zn(2+) site is built by Cys-141, Cys-144, Cys-153, and Cys-156. The 'KMSKS' region motif lies at 329–333 (KLSTS). Thr-332 contributes to the ATP binding site.

This sequence belongs to the class-I aminoacyl-tRNA synthetase family. MetG type 1 subfamily. As to quaternary structure, monomer. Zn(2+) serves as cofactor.

It is found in the cytoplasm. It catalyses the reaction tRNA(Met) + L-methionine + ATP = L-methionyl-tRNA(Met) + AMP + diphosphate. Its function is as follows. Is required not only for elongation of protein synthesis but also for the initiation of all mRNA translation through initiator tRNA(fMet) aminoacylation. The polypeptide is Methionine--tRNA ligase (Bacillus cereus (strain AH187)).